Consider the following 471-residue polypeptide: UDP-N-acetylmuramoylalanine--D-glutamate ligase (471 aa).

ATP is bound at residue 135–141; it reads GTNGKTT.

Belongs to the MurCDEF family.

Its subcellular location is the cytoplasm. The catalysed reaction is UDP-N-acetyl-alpha-D-muramoyl-L-alanine + D-glutamate + ATP = UDP-N-acetyl-alpha-D-muramoyl-L-alanyl-D-glutamate + ADP + phosphate + H(+). It participates in cell wall biogenesis; peptidoglycan biosynthesis. In terms of biological role, cell wall formation. Catalyzes the addition of glutamate to the nucleotide precursor UDP-N-acetylmuramoyl-L-alanine (UMA). The protein is UDP-N-acetylmuramoylalanine--D-glutamate ligase of Frankia casuarinae (strain DSM 45818 / CECT 9043 / HFP020203 / CcI3).